Consider the following 711-residue polypeptide: Polyribonucleotide nucleotidyltransferase (711 aa).

The Mg(2+) site is built by Asp-486 and Asp-492. One can recognise a KH domain in the interval 553–612 (PRIHTIKISTDKIKDVIGKGGSVIRALTEETGTTIEIEDDGTVKIAATDGEKAKYAIRRI). In terms of domain architecture, S1 motif spans 622–690 (GRIYNGKVTR…RQGRVRLSIK (69 aa)). The disordered stretch occupies residues 690–711 (KEATEQSQPAAAPEAPASEQAE). Residues 694-711 (EQSQPAAAPEAPASEQAE) are compositionally biased toward low complexity.

The protein belongs to the polyribonucleotide nucleotidyltransferase family. Component of the RNA degradosome, which is a multiprotein complex involved in RNA processing and mRNA degradation. Mg(2+) is required as a cofactor.

It localises to the cytoplasm. The catalysed reaction is RNA(n+1) + phosphate = RNA(n) + a ribonucleoside 5'-diphosphate. Functionally, involved in mRNA degradation. Catalyzes the phosphorolysis of single-stranded polyribonucleotides processively in the 3'- to 5'-direction. The polypeptide is Polyribonucleotide nucleotidyltransferase (Salmonella choleraesuis (strain SC-B67)).